The primary structure comprises 313 residues: tRNA dimethylallyltransferase (313 aa).

Gly12–Ser19 contributes to the ATP binding site. A substrate-binding site is contributed by Thr14–Ser19. 2 interaction with substrate tRNA regions span residues Asp37–Gln40 and Gln161–Arg165.

It belongs to the IPP transferase family. In terms of assembly, monomer. Requires Mg(2+) as cofactor.

The enzyme catalyses adenosine(37) in tRNA + dimethylallyl diphosphate = N(6)-dimethylallyladenosine(37) in tRNA + diphosphate. Its function is as follows. Catalyzes the transfer of a dimethylallyl group onto the adenine at position 37 in tRNAs that read codons beginning with uridine, leading to the formation of N6-(dimethylallyl)adenosine (i(6)A). The chain is tRNA dimethylallyltransferase from Pelagibacter ubique (strain HTCC1062).